The sequence spans 74 residues: U3-agatoxin-Ao1g (74 aa).

Positions 1-20 (MRAIISLLLISTMVFGVIEA) are cleaved as a signal peptide. Positions 21-34 (VSVEEGLKIFEGER) are excised as a propeptide. 4 cysteine pairs are disulfide-bonded: cysteine 37–cysteine 53, cysteine 44–cysteine 58, cysteine 52–cysteine 68, and cysteine 60–cysteine 66. Asparagine 72 is modified (asparagine amide).

This sequence belongs to the neurotoxin 07 (Beta/delta-agtx) family. 03 (aga-4) subfamily. Aga sub-subfamily. As to expression, expressed by the venom gland.

It is found in the secreted. In terms of biological role, insecticidal neurotoxin that modulates the insect Nav channel (DmNaV1/tipE (para/tipE)) in a unique manner, with both the activation and inactivation processes being affected. The voltage dependence of activation is shifted toward more hyperpolarized potentials (analogous to site 4 toxins) and a non-inactivating persistent sodium current is induced (site 3-like action). Interestingly, both effects take place in a voltage-dependent manner, producing a bell-shaped curve between -80 and 0 mV. This is U3-agatoxin-Ao1g from Agelena orientalis (Funnel-web spider).